Here is a 211-residue protein sequence, read N- to C-terminus: Ribosomal RNA small subunit methyltransferase G (211 aa).

S-adenosyl-L-methionine contacts are provided by residues Gly74, Leu79, 125–126, and Arg140; that span reads AE.

Belongs to the methyltransferase superfamily. RNA methyltransferase RsmG family.

Its subcellular location is the cytoplasm. Functionally, specifically methylates the N7 position of guanine in position 518 of 16S rRNA. The protein is Ribosomal RNA small subunit methyltransferase G of Clavibacter sepedonicus (Clavibacter michiganensis subsp. sepedonicus).